Consider the following 229-residue polypeptide: Germin-like protein 2-4 (229 aa).

The first 23 residues, 1–23 (MAHRRRCLLLLLAVLLPAMAARG), serve as a signal peptide directing secretion. The cysteines at positions 32 and 52 are disulfide-linked. N57 is a glycosylation site (N-linked (GlcNAc...) asparagine). A Cupin type-1 domain is found at 66-213 (SGVRAAGNFS…AFGLTPAELR (148 aa)). Positions 115, 117, 122, and 161 each coordinate Mn(2+).

The protein belongs to the germin family. As to quaternary structure, oligomer (believed to be a pentamer but probably hexamer).

Its subcellular location is the secreted. The protein resides in the extracellular space. It localises to the apoplast. May play a role in plant defense. Probably has no oxalate oxidase activity even if the active site is conserved. This is Germin-like protein 2-4 from Oryza sativa subsp. japonica (Rice).